Here is a 360-residue protein sequence, read N- to C-terminus: Ferredoxin--NADP reductase 1 (360 aa).

D43, Q51, Y56, A96, F141, D307, and S348 together coordinate FAD.

It belongs to the ferredoxin--NADP reductase type 2 family. As to quaternary structure, homodimer. FAD is required as a cofactor.

It carries out the reaction 2 reduced [2Fe-2S]-[ferredoxin] + NADP(+) + H(+) = 2 oxidized [2Fe-2S]-[ferredoxin] + NADPH. This is Ferredoxin--NADP reductase 1 from Cupriavidus taiwanensis (strain DSM 17343 / BCRC 17206 / CCUG 44338 / CIP 107171 / LMG 19424 / R1) (Ralstonia taiwanensis (strain LMG 19424)).